Reading from the N-terminus, the 177-residue chain is Nucleoside triphosphate/diphosphate phosphatase (177 aa).

R23 (proton donor) is an active-site residue. Mg(2+) contacts are provided by N87, D103, D105, D107, D120, and E123.

Belongs to the Ntdp family. Requires Mg(2+) as cofactor.

It carries out the reaction a ribonucleoside 5'-triphosphate + H2O = a ribonucleoside 5'-diphosphate + phosphate + H(+). The catalysed reaction is a ribonucleoside 5'-diphosphate + H2O = a ribonucleoside 5'-phosphate + phosphate + H(+). In terms of biological role, has nucleoside phosphatase activity towards nucleoside triphosphates and nucleoside diphosphates. The chain is Nucleoside triphosphate/diphosphate phosphatase from Streptococcus pyogenes serotype M1.